The following is a 367-amino-acid chain: tRNA-specific 2-thiouridylase MnmA (367 aa).

Residues 11-18 (GLSGGVDS) and Leu-37 contribute to the ATP site. The active-site Nucleophile is Cys-99. A disulfide bridge links Cys-99 with Cys-195. Gly-123 contacts ATP. The segment at 145 to 147 (KDQ) is interaction with tRNA. The Cysteine persulfide intermediate role is filled by Cys-195. The tract at residues 304–305 (RY) is interaction with tRNA.

It belongs to the MnmA/TRMU family.

The protein localises to the cytoplasm. The catalysed reaction is S-sulfanyl-L-cysteinyl-[protein] + uridine(34) in tRNA + AH2 + ATP = 2-thiouridine(34) in tRNA + L-cysteinyl-[protein] + A + AMP + diphosphate + H(+). In terms of biological role, catalyzes the 2-thiolation of uridine at the wobble position (U34) of tRNA, leading to the formation of s(2)U34. The protein is tRNA-specific 2-thiouridylase MnmA of Chlorobium luteolum (strain DSM 273 / BCRC 81028 / 2530) (Pelodictyon luteolum).